We begin with the raw amino-acid sequence, 202 residues long: 3-isopropylmalate dehydratase small subunit 2 (202 aa).

This sequence belongs to the LeuD family. LeuD type 1 subfamily. Heterodimer of LeuC and LeuD.

It catalyses the reaction (2R,3S)-3-isopropylmalate = (2S)-2-isopropylmalate. Its pathway is amino-acid biosynthesis; L-leucine biosynthesis; L-leucine from 3-methyl-2-oxobutanoate: step 2/4. In terms of biological role, catalyzes the isomerization between 2-isopropylmalate and 3-isopropylmalate, via the formation of 2-isopropylmaleate. The chain is 3-isopropylmalate dehydratase small subunit 2 from Bordetella parapertussis (strain 12822 / ATCC BAA-587 / NCTC 13253).